Here is a 68-residue protein sequence, read N- to C-terminus: U-actitoxin-Avt1 (68 aa).

An N-terminal signal peptide occupies residues 1–22 (MNSKAIISVFLIMLVVVSCTQA). Residues 23–40 (TYETEDDDEPGPRHSEKR) constitute a propeptide that is removed on maturation. The tract at residues 24-50 (YETEDDDEPGPRHSEKRSCARGCGGDS) is disordered. The segment covering 32–41 (PGPRHSEKRS) has biased composition (basic and acidic residues). Intrachain disulfides connect cysteine 42/cysteine 54, cysteine 46/cysteine 59, and cysteine 52/cysteine 66.

Stable protein with probable toxin activity. Does not show activity on all channels tested. Shows no hemolytic activity on rat erythrocytes. In Aulactinia veratra (Green snakelock anemone), this protein is U-actitoxin-Avt1.